Here is a 214-residue protein sequence, read N- to C-terminus: MIITWMEEFGVLFVKAFLSLLAIMNPFSSVPVVISLMNEYSKEEIRVIALKASVYAFFILTFFLISGDLLFRFMGITLPAFKVGGGILLFLIALNLVQGEVTKEKGKAHEIEAALRRDNIALIPLAMPLLAGPGSITTVLVLRGYLNTLEGKVALFCAIFLSSFTAFVVYSLSTFFYRVLGRTGINLITRISGILLLAISVQFVVDGLKNLLKH.

6 consecutive transmembrane segments (helical) span residues 17–37 (FLSLLAIMNPFSSVPVVISLM), 47–67 (VIALKASVYAFFILTFFLISG), 73–93 (FMGITLPAFKVGGGILLFLIA), 122–142 (LIPLAMPLLAGPGSITTVLVL), 153–173 (VALFCAIFLSSFTAFVVYSLS), and 185–205 (INLITRISGILLLAISVQFVV).

It belongs to the UPF0056 (MarC) family.

It localises to the cell membrane. The chain is UPF0056 membrane protein aq_540 from Aquifex aeolicus (strain VF5).